The following is a 231-amino-acid chain: Small ribosomal subunit protein uS3 (231 aa).

The KH type-2 domain occupies Val17–Ala86.

The protein belongs to the universal ribosomal protein uS3 family. In terms of assembly, part of the 30S ribosomal subunit.

Functionally, binds the lower part of the 30S subunit head. The chain is Small ribosomal subunit protein uS3 from Methanocorpusculum labreanum (strain ATCC 43576 / DSM 4855 / Z).